A 257-amino-acid chain; its full sequence is NAD kinase (257 aa).

Catalysis depends on Asp46, which acts as the Proton acceptor. Residues 46–47, 116–117, Asp146, Ala154, 157–162, and Asn218 contribute to the NAD(+) site; these read DG, NE, and TAYNLS.

It belongs to the NAD kinase family. The cofactor is a divalent metal cation.

It is found in the cytoplasm. It carries out the reaction NAD(+) + ATP = ADP + NADP(+) + H(+). Functionally, involved in the regulation of the intracellular balance of NAD and NADP, and is a key enzyme in the biosynthesis of NADP. Catalyzes specifically the phosphorylation on 2'-hydroxyl of the adenosine moiety of NAD to yield NADP. The polypeptide is NAD kinase (Brucella suis biovar 1 (strain 1330)).